The primary structure comprises 133 residues: Small ribosomal subunit protein uS8 (133 aa).

It belongs to the universal ribosomal protein uS8 family. In terms of assembly, part of the 30S ribosomal subunit.

In terms of biological role, one of the primary rRNA binding proteins, it binds directly to 16S rRNA central domain where it helps coordinate assembly of the platform of the 30S subunit. This Desulfurococcus amylolyticus (strain DSM 18924 / JCM 16383 / VKM B-2413 / 1221n) (Desulfurococcus kamchatkensis) protein is Small ribosomal subunit protein uS8.